The chain runs to 483 residues: Probable glycosyltransferase 4 (483 aa).

Topologically, residues 1–26 are cytoplasmic; that stretch reads MSKLQDRHGGEAAADVGRRARHQRLL. A helical; Signal-anchor for type II membrane protein transmembrane segment spans residues 27–47; that stretch reads LSFPVFPIVLLLLAPCTIFFF. The Lumenal portion of the chain corresponds to 48-483; that stretch reads TSGDVPLPRI…KKTSRAARPM (436 aa). Residues 71-119 form a disordered region; the sequence is AVAADTSPPPPSPPSSSPPPLSFPPPPPPPSSPPPPALPVVDDHSDTQR. Residues 77 to 108 are compositionally biased toward pro residues; that stretch reads SPPPPSPPSSSPPPLSFPPPPPPPSSPPPPAL. N448 carries N-linked (GlcNAc...) asparagine glycosylation.

This sequence belongs to the glycosyltransferase 34 family.

Its subcellular location is the golgi apparatus membrane. Its function is as follows. Probable glycosyltransferase that may be involved in the biosynthesis of xyloglucan. This Oryza sativa subsp. indica (Rice) protein is Probable glycosyltransferase 4.